The chain runs to 1857 residues: Chitin synthase Y (1857 aa).

Residues Met-1 to Pro-22 are disordered. The region spanning Met-1–Glu-788 is the Myosin motor domain. Gly-102 to Thr-109 provides a ligand contact to ATP. Positions Ser-601–Ser-653 are disordered. N-linked (GlcNAc...) asparagine glycosylation is present at Asn-634. Residues Leu-668–Asp-692 form an actin-binding region. 2 consecutive transmembrane segments (helical) span residues Trp-898 to Gly-918 and Leu-937 to Val-957. Positions Gln-961–Phe-1020 constitute a Cytochrome b5 heme-binding domain. Residues Asn-1047 and Asn-1072 are each glycosylated (N-linked (GlcNAc...) asparagine). The helical transmembrane segment at Phe-1209–Leu-1229 threads the bilayer. An N-linked (GlcNAc...) asparagine glycan is attached at Asn-1572. The next 3 helical transmembrane spans lie at Leu-1603–Leu-1623, Ile-1630–Ile-1650, and Met-1657–Phe-1677. In terms of domain architecture, DEK-C spans Leu-1799–Ser-1854.

It in the N-terminal section; belongs to the TRAFAC class myosin-kinesin ATPase superfamily. Myosin family. This sequence in the C-terminal section; belongs to the chitin synthase family. Class V subfamily.

It localises to the cell membrane. Its subcellular location is the cell septum. It is found in the cell tip. It carries out the reaction [(1-&gt;4)-N-acetyl-beta-D-glucosaminyl](n) + UDP-N-acetyl-alpha-D-glucosamine = [(1-&gt;4)-N-acetyl-beta-D-glucosaminyl](n+1) + UDP + H(+). In terms of biological role, polymerizes chitin, a structural polymer of the cell wall and septum, by transferring the sugar moiety of UDP-GlcNAc to the non-reducing end of the growing chitin polymer. Specifically involved in hyphal elongation and new cell wall formation. In Aspergillus oryzae (strain ATCC 42149 / RIB 40) (Yellow koji mold), this protein is Chitin synthase Y.